Here is a 569-residue protein sequence, read N- to C-terminus: Adenine deaminase 1 (569 aa).

The protein belongs to the metallo-dependent hydrolases superfamily. Adenine deaminase family. It depends on Mn(2+) as a cofactor.

It catalyses the reaction adenine + H2O + H(+) = hypoxanthine + NH4(+). In Rhizobium johnstonii (strain DSM 114642 / LMG 32736 / 3841) (Rhizobium leguminosarum bv. viciae), this protein is Adenine deaminase 1.